We begin with the raw amino-acid sequence, 341 residues long: Beta-hexosaminidase (341 aa).

Substrate-binding positions include aspartate 61, arginine 69, arginine 134, and 164–165 (KH). The active-site Proton donor/acceptor is the histidine 177. The active-site Nucleophile is the aspartate 249.

It belongs to the glycosyl hydrolase 3 family. NagZ subfamily.

The protein localises to the cytoplasm. The enzyme catalyses Hydrolysis of terminal non-reducing N-acetyl-D-hexosamine residues in N-acetyl-beta-D-hexosaminides.. Its pathway is cell wall biogenesis; peptidoglycan recycling. Plays a role in peptidoglycan recycling by cleaving the terminal beta-1,4-linked N-acetylglucosamine (GlcNAc) from peptide-linked peptidoglycan fragments, giving rise to free GlcNAc, anhydro-N-acetylmuramic acid and anhydro-N-acetylmuramic acid-linked peptides. The polypeptide is Beta-hexosaminidase (Shewanella frigidimarina (strain NCIMB 400)).